Here is a 1159-residue protein sequence, read N- to C-terminus: WASH complex subunit 5 (1159 aa).

Residue serine 917 is modified to Phosphoserine.

This sequence belongs to the strumpellin family. As to quaternary structure, component of the WASH core complex also described as WASH regulatory complex (SHRC) composed of WASH (WASHC1, WASH2P or WASH3P), WASHC2 (WASHC2A or WASHC2C), WASHC3, WASHC4 and WASHC5. The WASH core complex associates via WASHC2 with the F-actin-capping protein dimer (formed by CAPZA1, CAPZA2 or CAPZA3 and CAPZB) in a transient or substoichiometric manner which was initially described as WASH complex. Interacts with VCP, PI4K2A.

It is found in the cytoplasm. The protein resides in the cytosol. It localises to the endoplasmic reticulum. The protein localises to the early endosome. In terms of biological role, acts as a component of the WASH core complex that functions as a nucleation-promoting factor (NPF) at the surface of endosomes, where it recruits and activates the Arp2/3 complex to induce actin polymerization, playing a key role in the fission of tubules that serve as transport intermediates during endosome sorting. May be involved in axonal outgrowth. Involved in cellular localization of ADRB2. Involved in cellular trafficking of BLOC-1 complex cargos such as ATP7A and VAMP7. In Pongo abelii (Sumatran orangutan), this protein is WASH complex subunit 5.